We begin with the raw amino-acid sequence, 343 residues long: Tetraacyldisaccharide 4'-kinase (343 aa).

Position 61 to 68 (61 to 68 (GVGGNGKT)) interacts with ATP.

Belongs to the LpxK family.

It catalyses the reaction a lipid A disaccharide + ATP = a lipid IVA + ADP + H(+). It functions in the pathway glycolipid biosynthesis; lipid IV(A) biosynthesis; lipid IV(A) from (3R)-3-hydroxytetradecanoyl-[acyl-carrier-protein] and UDP-N-acetyl-alpha-D-glucosamine: step 6/6. Transfers the gamma-phosphate of ATP to the 4'-position of a tetraacyldisaccharide 1-phosphate intermediate (termed DS-1-P) to form tetraacyldisaccharide 1,4'-bis-phosphate (lipid IVA). This is Tetraacyldisaccharide 4'-kinase from Colwellia psychrerythraea (strain 34H / ATCC BAA-681) (Vibrio psychroerythus).